The chain runs to 182 residues: NADH-ubiquinone oxidoreductase 20 kDa subunit (182 aa).

Residues Cys57, Cys58, Cys122, and Cys152 each coordinate [4Fe-4S] cluster.

The protein belongs to the complex I 20 kDa subunit family. Requires [4Fe-4S] cluster as cofactor.

The protein resides in the mitochondrion. It catalyses the reaction a ubiquinone + NADH + 5 H(+)(in) = a ubiquinol + NAD(+) + 4 H(+)(out). The chain is NADH-ubiquinone oxidoreductase 20 kDa subunit (NAD10) from Reclinomonas americana.